Reading from the N-terminus, the 327-residue chain is MEVAVPVKQEAEGLALDSPWHRFRRFHLGDAPGPREALGLLRALCRDWLRPEVHTKEQMLELLVLEQFLSALPADTQAWVCSRQPQSGEEAVALLEELWGPAASPDGSSATRVPQDVTQGPGATGGKEDSGMIPLAGTAPGAEGPAPGDSQAVRPYKQEPSSPPLAPGLPAFLAAPGTTSCPECGKTSLKPAHLLRHRQSHSGEKPHACPECGKAFRRKEHLRRHRDTHPGSPGSPGPALRPLPAREKPHACCECGKTFYWREHLVRHRKTHSGARPFACWECGKGFGRREHVLRHQRIHGRAAASAQGAVAPGPDGGGPFPPWPLG.

Methionine 1 carries the N-acetylmethionine modification. Lysine 8 participates in a covalent cross-link: Glycyl lysine isopeptide (Lys-Gly) (interchain with G-Cter in SUMO2). Residues serine 18 and serine 104 each carry the phosphoserine modification. In terms of domain architecture, SCAN box spans 20-104 (WHRFRRFHLG…LEELWGPAAS (85 aa)). The segment at 101-171 (PAASPDGSSA…SPPLAPGLPA (71 aa)) is disordered. Residues 106–118 (DGSSATRVPQDVT) are compositionally biased toward polar residues. Positions 134 to 148 (PLAGTAPGAEGPAPG) are enriched in low complexity. C2H2-type zinc fingers lie at residues 179–201 (TSCP…RQSH) and 207–229 (HACP…RDTH). Residue lysine 190 forms a Glycyl lysine isopeptide (Lys-Gly) (interchain with G-Cter in SUMO2) linkage. Positions 220–243 (EHLRRHRDTHPGSPGSPGPALRPL) are disordered. A Phosphoserine modification is found at serine 235. C2H2-type zinc fingers lie at residues 250 to 272 (HACC…RKTH) and 278 to 300 (FACW…QRIH). A compositionally biased stretch (low complexity) spans 305-314 (ASAQGAVAPG). Positions 305–327 (ASAQGAVAPGPDGGGPFPPWPLG) are disordered.

The protein belongs to the krueppel C2H2-type zinc-finger protein family.

It localises to the nucleus. Transcriptional regulator. Binds to the 5'-flanking critical region of the SCARF1 promoter. The sequence is that of Zinc finger protein 444 (ZNF444) from Homo sapiens (Human).